We begin with the raw amino-acid sequence, 23 residues long: Coenzyme PQQ synthesis protein A (23 aa).

A cross-link (pyrroloquinoline quinone (Glu-Tyr)) is located at residues 15–19 (EVTMY).

It belongs to the PqqA family.

Its pathway is cofactor biosynthesis; pyrroloquinoline quinone biosynthesis. In terms of biological role, required for coenzyme pyrroloquinoline quinone (PQQ) biosynthesis. PQQ is probably formed by cross-linking a specific glutamate to a specific tyrosine residue and excising these residues from the peptide. The polypeptide is Coenzyme PQQ synthesis protein A (Pseudomonas putida (strain W619)).